The sequence spans 105 residues: uncharacterized protein (105 aa).

The next 2 membrane-spanning stretches (helical) occupy residues Asn-26 to Ile-46 and Ser-66 to Ile-86.

The protein resides in the cell membrane. This is an uncharacterized protein from Mycoplasma pneumoniae (strain ATCC 29342 / M129 / Subtype 1) (Mycoplasmoides pneumoniae).